A 288-amino-acid chain; its full sequence is uncharacterized protein (288 aa).

One can recognise an HTH lysR-type domain in the interval 1–59 (MDKLNAISIFCKVIETQSFTLAAKQQNISVAMASKLVSQLEEHLKTRLLQRTTRKIMPT). A DNA-binding region (H-T-H motif) is located at residues 19-38 (FTLAAKQQNISVAMASKLVS).

It belongs to the LysR transcriptional regulatory family.

This is an uncharacterized protein from Haemophilus influenzae (strain ATCC 51907 / DSM 11121 / KW20 / Rd).